Here is a 389-residue protein sequence, read N- to C-terminus: 8-amino-7-oxononanoate synthase (389 aa).

Arg-19 is a substrate binding site. 106–107 provides a ligand contact to pyridoxal 5'-phosphate; that stretch reads GY. Position 131 (His-131) interacts with substrate. Residues Ser-178, 203–206, and 234–237 contribute to the pyridoxal 5'-phosphate site; these read DDAH and TLSK. Lys-237 is subject to N6-(pyridoxal phosphate)lysine. Substrate is bound at residue Thr-351.

This sequence belongs to the class-II pyridoxal-phosphate-dependent aminotransferase family. BioF subfamily. In terms of assembly, homodimer. Pyridoxal 5'-phosphate serves as cofactor.

The catalysed reaction is 6-carboxyhexanoyl-[ACP] + L-alanine + H(+) = (8S)-8-amino-7-oxononanoate + holo-[ACP] + CO2. The protein operates within cofactor biosynthesis; biotin biosynthesis. Functionally, catalyzes the decarboxylative condensation of pimeloyl-[acyl-carrier protein] and L-alanine to produce 8-amino-7-oxononanoate (AON), [acyl-carrier protein], and carbon dioxide. Can also use pimeloyl-CoA instead of pimeloyl-ACP as substrate. This chain is 8-amino-7-oxononanoate synthase (bioF), found in Lysinibacillus sphaericus (Bacillus sphaericus).